Consider the following 72-residue polypeptide: UPF0270 protein KPN78578_37030 (72 aa).

The protein belongs to the UPF0270 family.

This is UPF0270 protein KPN78578_37030 from Klebsiella pneumoniae subsp. pneumoniae (strain ATCC 700721 / MGH 78578).